The primary structure comprises 787 residues: Serine/threonine-protein kinase SCH9 (787 aa).

Disordered regions lie at residues 1-82, 132-172, and 238-280; these read MVDF…QSGT, PQQQ…GSSQ, and SPVS…LFGQ. Positions 132–155 are enriched in low complexity; that stretch reads PQQQQQQQAQQPPPEQQQSSAPYQ. 2 stretches are compositionally biased toward polar residues: residues 156–172 and 239–263; these read NSANIQQPYGNQWGSSQ and PVSSFGHNNNQGHNGPRNMYNSNHG. The C2 domain maps to 182–354; that stretch reads DKTGNKLSPA…KNNKNESEWL (173 aa). A Protein kinase domain is found at 392-653; sequence FHFLRLLGKG…ARELKAHPFF (262 aa). Residues 398–406 and Lys-421 contribute to the ATP site; that span reads LGKGTFGQV. The active-site Proton acceptor is the Asp-518. In terms of domain architecture, AGC-kinase C-terminal spans 654–729; that stretch reads ADIDWDLLRA…VDDSTMDDHF (76 aa).

It belongs to the protein kinase superfamily. AGC Ser/Thr protein kinase family. cAMP subfamily.

The catalysed reaction is L-seryl-[protein] + ATP = O-phospho-L-seryl-[protein] + ADP + H(+). It catalyses the reaction L-threonyl-[protein] + ATP = O-phospho-L-threonyl-[protein] + ADP + H(+). Protein kinase that is part of growth control pathway which is at least partially redundant with the cAMP pathway. Plays a role in filamentous growth and virulence. Prevents hypha formation specifically under hypoxia at high CO(2) levels. Required for chlamydospore formation, distinctive morphological feature of the fungal pathogen C.albicans that can be induced to form in oxygen-limited environments and has been reported in clinical specimens. The sequence is that of Serine/threonine-protein kinase SCH9 (SCH9) from Candida albicans (strain SC5314 / ATCC MYA-2876) (Yeast).